The sequence spans 381 residues: p55-v-Fos-transforming protein (381 aa).

A bZIP domain is found at glutamate 137–histidine 200. The basic motif stretch occupies residues lysine 139 to arginine 159. The segment at leucine 165–leucine 193 is leucine-zipper.

This sequence belongs to the bZIP family. Fos subfamily.

It is found in the host nucleus. In Mus musculus (Mouse), this protein is p55-v-Fos-transforming protein (V-FOS).